Here is a 557-residue protein sequence, read N- to C-terminus: Urocanate hydratase (557 aa).

Residues 53 to 54 (GG), Gln-131, 177 to 179 (GMG), Glu-197, Arg-202, 243 to 244 (NA), 264 to 268 (QTSAH), 274 to 275 (YL), and Tyr-323 contribute to the NAD(+) site. Cys-411 is an active-site residue. Gly-493 contacts NAD(+).

The protein belongs to the urocanase family. Requires NAD(+) as cofactor.

It is found in the cytoplasm. It catalyses the reaction 4-imidazolone-5-propanoate = trans-urocanate + H2O. The protein operates within amino-acid degradation; L-histidine degradation into L-glutamate; N-formimidoyl-L-glutamate from L-histidine: step 2/3. In terms of biological role, catalyzes the conversion of urocanate to 4-imidazolone-5-propionate. The protein is Urocanate hydratase of Pseudomonas putida (strain ATCC 700007 / DSM 6899 / JCM 31910 / BCRC 17059 / LMG 24140 / F1).